The primary structure comprises 445 residues: Argininosuccinate synthase (445 aa).

ATP-binding positions include A17 to S25 and A43. Residue Y99 coordinates L-citrulline. Residues G129 and T131 each coordinate ATP. The L-aspartate site is built by T131, N135, and D136. Residue N135 coordinates L-citrulline. D136 contacts ATP. Residues R139 and S192 each contribute to the L-citrulline site. Residue D194 participates in ATP binding. Residues T201, E203, and E280 each contribute to the L-citrulline site.

The protein belongs to the argininosuccinate synthase family. Type 2 subfamily. In terms of assembly, homotetramer.

It localises to the cytoplasm. The enzyme catalyses L-citrulline + L-aspartate + ATP = 2-(N(omega)-L-arginino)succinate + AMP + diphosphate + H(+). It participates in amino-acid biosynthesis; L-arginine biosynthesis; L-arginine from L-ornithine and carbamoyl phosphate: step 2/3. This is Argininosuccinate synthase from Rhodopseudomonas palustris (strain BisB5).